The sequence spans 503 residues: Probable cytosol aminopeptidase (503 aa).

The Mn(2+) site is built by K270 and D275. K282 is an active-site residue. The Mn(2+) site is built by D293, D352, and E354. R356 is an active-site residue.

This sequence belongs to the peptidase M17 family. Mn(2+) serves as cofactor.

The protein resides in the cytoplasm. It catalyses the reaction Release of an N-terminal amino acid, Xaa-|-Yaa-, in which Xaa is preferably Leu, but may be other amino acids including Pro although not Arg or Lys, and Yaa may be Pro. Amino acid amides and methyl esters are also readily hydrolyzed, but rates on arylamides are exceedingly low.. The enzyme catalyses Release of an N-terminal amino acid, preferentially leucine, but not glutamic or aspartic acids.. Its function is as follows. Presumably involved in the processing and regular turnover of intracellular proteins. Catalyzes the removal of unsubstituted N-terminal amino acids from various peptides. The chain is Probable cytosol aminopeptidase from Klebsiella pneumoniae (strain 342).